We begin with the raw amino-acid sequence, 277 residues long: Collectin-10 (277 aa).

An N-terminal signal peptide occupies residues 1–27 (MNGFASLLRRNQFILLVLFLLQIQSLG). The tract at residues 40-107 (ATHTISPGPK…GDKGEKGLLG (68 aa)) is disordered. The segment covering 49–64 (KGDDGEKGDPGEEGKH) has biased composition (basic and acidic residues). The Collagen-like domain maps to 53–112 (GEKGDPGEEGKHGKVGRMGPKGIKGELGDMGDQGNIGKTGPIGKKGDKGEKGLLGIPGEK). The 117-residue stretch at 155–271 (TEEKFYYIVQ…CHLTMYFVCE (117 aa)) folds into the C-type lectin domain. Disulfide bonds link C176–C270 and C248–C262. N258 carries N-linked (GlcNAc...) asparagine glycosylation.

Belongs to the COLEC10/COLEC11 family. Highly expressed in liver, placenta and adrenal gland. Moderately expressed in small intestine, lung, stomach and prostate. Weakly expressed in trachea and spleen.

Its subcellular location is the secreted. The protein resides in the golgi apparatus. It is found in the cytoplasm. Its function is as follows. Lectin that binds to various sugars: galactose &gt; mannose = fucose &gt; N-acetylglucosamine &gt; N-acetylgalactosamine. Acts as a chemoattractant, probably involved in the regulation of cell migration. The protein is Collectin-10 (COLEC10) of Homo sapiens (Human).